The chain runs to 287 residues: ATP synthase gamma chain (287 aa).

This sequence belongs to the ATPase gamma chain family. F-type ATPases have 2 components, CF(1) - the catalytic core - and CF(0) - the membrane proton channel. CF(1) has five subunits: alpha(3), beta(3), gamma(1), delta(1), epsilon(1). CF(0) has three main subunits: a, b and c.

It localises to the cell inner membrane. Produces ATP from ADP in the presence of a proton gradient across the membrane. The gamma chain is believed to be important in regulating ATPase activity and the flow of protons through the CF(0) complex. The chain is ATP synthase gamma chain from Sodalis glossinidius (strain morsitans).